A 131-amino-acid polypeptide reads, in one-letter code: MSAKTEEILESLKSLSLLEASELVKQIEEAFGVSAAASAGVVMAAPGAAGGDGDDGAAEEKTEFDVVLESFDAAAKIKVLKVVRNATGLGLGDAKTLVESAPKTVKEGIAKADAESLKKEIEEAGGKVTLK.

This sequence belongs to the bacterial ribosomal protein bL12 family. In terms of assembly, homodimer. Part of the ribosomal stalk of the 50S ribosomal subunit. Forms a multimeric L10(L12)X complex, where L10 forms an elongated spine to which 2 to 4 L12 dimers bind in a sequential fashion. Binds GTP-bound translation factors.

In terms of biological role, forms part of the ribosomal stalk which helps the ribosome interact with GTP-bound translation factors. Is thus essential for accurate translation. This Prochlorococcus marinus (strain MIT 9215) protein is Large ribosomal subunit protein bL12.